The following is a 351-amino-acid chain: N-acetyl-gamma-glutamyl-phosphate reductase (351 aa).

C154 is a catalytic residue.

It belongs to the NAGSA dehydrogenase family. Type 1 subfamily.

It is found in the cytoplasm. The catalysed reaction is N-acetyl-L-glutamate 5-semialdehyde + phosphate + NADP(+) = N-acetyl-L-glutamyl 5-phosphate + NADPH + H(+). It participates in amino-acid biosynthesis; L-arginine biosynthesis; N(2)-acetyl-L-ornithine from L-glutamate: step 3/4. Functionally, catalyzes the NADPH-dependent reduction of N-acetyl-5-glutamyl phosphate to yield N-acetyl-L-glutamate 5-semialdehyde. The sequence is that of N-acetyl-gamma-glutamyl-phosphate reductase from Synechocystis sp. (strain ATCC 27184 / PCC 6803 / Kazusa).